The primary structure comprises 482 residues: Cysteine--tRNA ligase (482 aa).

A Zn(2+)-binding site is contributed by C28. The short motif at P30 to N40 is the 'HIGH' region element. Residues C208, H233, and E237 each contribute to the Zn(2+) site. A 'KMSKS' region motif is present at residues K265–S269. K268 serves as a coordination point for ATP.

It belongs to the class-I aminoacyl-tRNA synthetase family. Monomer. Zn(2+) serves as cofactor.

It localises to the cytoplasm. The catalysed reaction is tRNA(Cys) + L-cysteine + ATP = L-cysteinyl-tRNA(Cys) + AMP + diphosphate. The polypeptide is Cysteine--tRNA ligase (Bdellovibrio bacteriovorus (strain ATCC 15356 / DSM 50701 / NCIMB 9529 / HD100)).